Here is a 118-residue protein sequence, read N- to C-terminus: Small ribosomal subunit protein uS13 (118 aa).

The segment at 93-118 (RNLPVRGQNTKNNARTRKGPTRPLKR) is disordered. Residues 106–118 (ARTRKGPTRPLKR) show a composition bias toward basic residues.

Belongs to the universal ribosomal protein uS13 family. As to quaternary structure, part of the 30S ribosomal subunit. Forms a loose heterodimer with protein S19. Forms two bridges to the 50S subunit in the 70S ribosome.

Functionally, located at the top of the head of the 30S subunit, it contacts several helices of the 16S rRNA. In the 70S ribosome it contacts the 23S rRNA (bridge B1a) and protein L5 of the 50S subunit (bridge B1b), connecting the 2 subunits; these bridges are implicated in subunit movement. Contacts the tRNAs in the A and P-sites. This chain is Small ribosomal subunit protein uS13, found in Psychrobacter cryohalolentis (strain ATCC BAA-1226 / DSM 17306 / VKM B-2378 / K5).